Here is a 541-residue protein sequence, read N- to C-terminus: Glycogen synthase (541 aa).

Lys-17 provides a ligand contact to ADP-alpha-D-glucose. The segment at 497-541 (LARPASPPDTAPVGKPARRRRTTALSTTARAHPVARAAGREKIRA) is disordered.

It belongs to the glycosyltransferase 1 family. Bacterial/plant glycogen synthase subfamily.

It catalyses the reaction [(1-&gt;4)-alpha-D-glucosyl](n) + ADP-alpha-D-glucose = [(1-&gt;4)-alpha-D-glucosyl](n+1) + ADP + H(+). It functions in the pathway glycan biosynthesis; glycogen biosynthesis. Synthesizes alpha-1,4-glucan chains using ADP-glucose. The polypeptide is Glycogen synthase (Ralstonia nicotianae (strain ATCC BAA-1114 / GMI1000) (Ralstonia solanacearum)).